Reading from the N-terminus, the 88-residue chain is MAGTPPVAEGITNPPIDELLEVVDSKYSLVTMAAKRARQINAYYAQLGEGLLEYVGPLVETQPQEKPLSIALREIREGLLTAETQEEA.

It belongs to the RNA polymerase subunit omega family. The RNAP catalytic core consists of 2 alpha, 1 beta, 1 beta' and 1 omega subunit. When a sigma factor is associated with the core the holoenzyme is formed, which can initiate transcription.

The enzyme catalyses RNA(n) + a ribonucleoside 5'-triphosphate = RNA(n+1) + diphosphate. In terms of biological role, promotes RNA polymerase assembly. Latches the N- and C-terminal regions of the beta' subunit thereby facilitating its interaction with the beta and alpha subunits. The polypeptide is DNA-directed RNA polymerase subunit omega (Thermobifida fusca (strain YX)).